A 138-amino-acid polypeptide reads, in one-letter code: Proofreading thioesterase EntH (138 aa).

Catalysis depends on glutamate 64, which acts as the Nucleophile or proton acceptor.

This sequence belongs to the thioesterase PaaI family. In terms of assembly, homotetramer. Dimer of dimers. Interacts specifically with the aryl carrier protein (ArCP) domain of EntB.

The protein localises to the cytoplasm. The protein operates within siderophore biosynthesis; enterobactin biosynthesis. Required for optimal enterobactin synthesis. Acts as a proofreading enzyme that prevents EntB misacylation by hydrolyzing the thioester bound existing between EntB and wrongly charged molecules. In Salmonella arizonae (strain ATCC BAA-731 / CDC346-86 / RSK2980), this protein is Proofreading thioesterase EntH.